Here is a 1028-residue protein sequence, read N- to C-terminus: Beta-galactosidase (1028 aa).

The substrate site is built by asparagine 104 and aspartate 203. A Na(+)-binding site is contributed by aspartate 203. Positions 418, 420, and 463 each coordinate Mg(2+). Residues glutamate 463 and 539–542 each bind substrate; that span reads EYAH. Residue glutamate 463 is the Proton donor of the active site. Residue glutamate 539 is the Nucleophile of the active site. Asparagine 599 serves as a coordination point for Mg(2+). 2 residues coordinate Na(+): phenylalanine 603 and asparagine 606. 2 residues coordinate substrate: asparagine 606 and tryptophan 1004.

Belongs to the glycosyl hydrolase 2 family. As to quaternary structure, homotetramer. Requires Mg(2+) as cofactor. Na(+) serves as cofactor.

It catalyses the reaction Hydrolysis of terminal non-reducing beta-D-galactose residues in beta-D-galactosides.. The protein is Beta-galactosidase of Enterobacter sp. (strain 638).